Reading from the N-terminus, the 273-residue chain is 4-hydroxy-tetrahydrodipicolinate reductase (273 aa).

NAD(+) is bound by residues 12 to 17 (GAGGRM) and glutamate 38. NADP(+) is bound at residue arginine 39. NAD(+) contacts are provided by residues 102 to 104 (GTT) and 126 to 129 (AANF). The Proton donor/acceptor role is filled by histidine 159. Histidine 160 serves as a coordination point for (S)-2,3,4,5-tetrahydrodipicolinate. Lysine 163 acts as the Proton donor in catalysis. 169–170 (GT) contributes to the (S)-2,3,4,5-tetrahydrodipicolinate binding site.

The protein belongs to the DapB family. As to quaternary structure, homotetramer.

The protein localises to the cytoplasm. It carries out the reaction (S)-2,3,4,5-tetrahydrodipicolinate + NAD(+) + H2O = (2S,4S)-4-hydroxy-2,3,4,5-tetrahydrodipicolinate + NADH + H(+). It catalyses the reaction (S)-2,3,4,5-tetrahydrodipicolinate + NADP(+) + H2O = (2S,4S)-4-hydroxy-2,3,4,5-tetrahydrodipicolinate + NADPH + H(+). It functions in the pathway amino-acid biosynthesis; L-lysine biosynthesis via DAP pathway; (S)-tetrahydrodipicolinate from L-aspartate: step 4/4. Catalyzes the conversion of 4-hydroxy-tetrahydrodipicolinate (HTPA) to tetrahydrodipicolinate. In Salmonella enteritidis PT4 (strain P125109), this protein is 4-hydroxy-tetrahydrodipicolinate reductase.